Reading from the N-terminus, the 187-residue chain is Large ribosomal subunit protein uL6 (187 aa).

Residues 151–170 (EAARIRSLRPPEPYKGKGIK) form a disordered region.

The protein belongs to the universal ribosomal protein uL6 family. In terms of assembly, part of the 50S ribosomal subunit.

Functionally, this protein binds to the 23S rRNA, and is important in its secondary structure. It is located near the subunit interface in the base of the L7/L12 stalk, and near the tRNA binding site of the peptidyltransferase center. The sequence is that of Large ribosomal subunit protein uL6 from Chloroflexus aurantiacus (strain ATCC 29366 / DSM 635 / J-10-fl).